The chain runs to 98 residues: Feather keratin 3 (98 aa).

This sequence belongs to the avian keratin family. The avian keratins (F-ker, S-ker, C-ker and B-ker) are a complex mixture of very similar polypeptides.

The protein is Feather keratin 3 of Gallus gallus (Chicken).